A 292-amino-acid chain; its full sequence is Chronophin (292 aa).

Residue D25 is the Nucleophile of the active site. Positions 25 and 27 each coordinate Mg(2+). Residue D27 is the Proton donor of the active site. Residues 58-60 (SNN), H178, and K209 each bind substrate. D234 contacts Mg(2+).

It belongs to the HAD-like hydrolase superfamily. In terms of assembly, homodimer. It depends on Mg(2+) as a cofactor. In terms of tissue distribution, ubiquitous. highly expressed in brain (at protein level).

The protein resides in the cytoplasm. The protein localises to the cytosol. Its subcellular location is the cytoskeleton. It localises to the cell projection. It is found in the ruffle membrane. The protein resides in the lamellipodium membrane. The protein localises to the cell membrane. The catalysed reaction is pyridoxal 5'-phosphate + H2O = pyridoxal + phosphate. The enzyme catalyses pyridoxine 5'-phosphate + H2O = pyridoxine + phosphate. It carries out the reaction pyridoxamine + phosphate = pyridoxamine 5'-phosphate + H2O. It catalyses the reaction O-phospho-L-seryl-[protein] + H2O = L-seryl-[protein] + phosphate. Its activity is regulated as follows. Inhibited by beryllium trifluoride. Its function is as follows. Functions as a pyridoxal phosphate (PLP) phosphatase, which also catalyzes the dephosphorylation of pyridoxine 5'-phosphate (PNP) and pyridoxamine 5'-phosphate (PMP), with order of substrate preference PLP &gt; PNP &gt; PMP and therefore plays a role in vitamin B6 metabolism. Also functions as a protein serine phosphatase that specifically dephosphorylates 'Ser-3' in proteins of the actin-depolymerizing factor (ADF)/cofilin family like CFL1 and DSTN. Thereby, regulates cofilin-dependent actin cytoskeleton reorganization, being required for normal progress through mitosis and normal cytokinesis. Does not dephosphorylate phosphothreonines in LIMK1. Does not dephosphorylate peptides containing phosphotyrosine. In Mus musculus (Mouse), this protein is Chronophin.